Here is a 778-residue protein sequence, read N- to C-terminus: uncharacterized protein (778 aa).

Residues 1 to 92 form the PE domain; that stretch reads MSFVIAVPEA…GARSYVVAEA (92 aa). Disordered regions lie at residues 125–163, 372–510, and 718–778; these read ADGTGAPGGPGGLLLGNGGNGGSGAPGQPGGAGGDAGLI, TGLA…GDAF, and QGGL…GADG. Gly residues-rich tracts occupy residues 402 to 429, 436 to 510, and 718 to 763; these read NQTGGNGGPGPAGGVGEAGGVGGQGGLG, DGTG…GDAF, and QGGL…GSSG.

Belongs to the mycobacterial PE family. PGRS subfamily.

This is an uncharacterized protein from Mycobacterium bovis (strain ATCC BAA-935 / AF2122/97).